The following is a 237-amino-acid chain: Arginine-binding periplasmic protein (237 aa).

An N-terminal signal peptide occupies residues 1–18; sequence MKKTLLTLLFGCVVTAQA.

Belongs to the bacterial solute-binding protein 3 family.

It localises to the periplasm. In terms of biological role, binds arginine; part of the arginine periplasmic transport system. The polypeptide is Arginine-binding periplasmic protein (lapT) (Mannheimia haemolytica (Pasteurella haemolytica)).